The chain runs to 135 residues: Large ribosomal subunit protein uL16c (135 aa).

Belongs to the universal ribosomal protein uL16 family. Part of the 50S ribosomal subunit.

It is found in the plastid. Its subcellular location is the chloroplast. In Gossypium barbadense (Sea Island cotton), this protein is Large ribosomal subunit protein uL16c.